A 241-amino-acid chain; its full sequence is MTPEEFRQSLAGQGLNLTDEQMQQFELYYEFLVETNKNLNLTAITEKNEVYLKHFYDSLLLALTVKDLQTEELSLCDVGAGAGFPSLPVKIAFPQLKITIVDSLNKRIKFLQELTQKLNLQDVHFHHARAEEFGGKRSVHRERYDLVTARAVARMSVLSELCLPLAKVGGRFIALKAQKSDEELKNAQKAIEVLGGKVIADYATELPQVHDERHIIVVAKEKETPKKYPRKAGTPAKSPIE.

Residues Gly79, Phe84, Ala130–Glu131, and Arg150 each bind S-adenosyl-L-methionine.

It belongs to the methyltransferase superfamily. RNA methyltransferase RsmG family.

The protein resides in the cytoplasm. Functionally, specifically methylates the N7 position of a guanine in 16S rRNA. The protein is Ribosomal RNA small subunit methyltransferase G of Ligilactobacillus salivarius (strain UCC118) (Lactobacillus salivarius).